The sequence spans 75 residues: Small ribosomal subunit protein bS18 (75 aa).

Belongs to the bacterial ribosomal protein bS18 family. Part of the 30S ribosomal subunit. Forms a tight heterodimer with protein bS6.

Its function is as follows. Binds as a heterodimer with protein bS6 to the central domain of the 16S rRNA, where it helps stabilize the platform of the 30S subunit. This chain is Small ribosomal subunit protein bS18, found in Shewanella denitrificans (strain OS217 / ATCC BAA-1090 / DSM 15013).